Here is a 492-residue protein sequence, read N- to C-terminus: MIGVIDAGTTTIKLAVYDEDKLVAIKKEPVVKHNPKPGWVEIDAEDLARKCVSFADTAIDEYGVEVIAITNQRTTAVLWDGKTGRPVFNALGWQDMRANALAEEMNRDSTIRMARTAGMIARGVVKLLPTLKNKRRVKWLITLSRLSIRPNHTSVKLCWMLRELGEKKEKYDLKAGTVDSWLVYRLTGEHLTDYSNAAATGLYDSYYLRWSEPILKIVGADEEMLPKTLESDRIFGEYRNVPVTGVIADQSASLYALGCWEEGDIKATNGTGTFVDLNVGEEPQASPGGLLPLIAWKLKSEMRYMMEGMLFYSGSAVEKLKEIGIYDDVSKTSEMAFRSKNDDMLLIPSFTGLATPHYVSVPGLLYGISNAMTREDIVKALLESIAFRIAEIVEIMRKEFPYETDRIRCDGEMSSNDFFLQRIADVTGLKVERGAVLSGTSFGAHLVAGRALGKWKKDFCMPFDKVFEPSLDLSEKYRRWKRLLEISKKLKV.

The protein belongs to the FGGY kinase family.

This is an uncharacterized protein from Archaeoglobus fulgidus (strain ATCC 49558 / DSM 4304 / JCM 9628 / NBRC 100126 / VC-16).